The chain runs to 216 residues: Pyrrolidone-carboxylate peptidase (216 aa).

Catalysis depends on residues Glu80, Cys143, and His168.

It belongs to the peptidase C15 family. Homotetramer.

It localises to the cytoplasm. It catalyses the reaction Release of an N-terminal pyroglutamyl group from a polypeptide, the second amino acid generally not being Pro.. Removes 5-oxoproline from various penultimate amino acid residues except L-proline. The protein is Pyrrolidone-carboxylate peptidase of Cupriavidus necator (strain ATCC 17699 / DSM 428 / KCTC 22496 / NCIMB 10442 / H16 / Stanier 337) (Ralstonia eutropha).